Consider the following 952-residue polypeptide: MRVRHPPCSRRLLAICALVSLATAALLGHILLHDFLLVPRELSGSSPVLEETHPAHQQGASRPGPRDAQAHLGRPRAVPTQCDVPPNSRFDCAPDKAITREQCDARGCCYIPAKQGLRGAQMGQPWCFFPPSYPSYKLENLSSSEMGYTATLTRTTPTFFPKDILTLRLDVMMETENRLHFTIKDPANRRYEVPLETPRVHSRAPSPLYSVEFSEEPFGVIVRRQLDGRVLLNTTVAPLFFADQFLQLSTSLPSQYITGLAEHLSPLMLSTSWTRVTLWNRDLAPTPGANLYGSHPFYLALEDGGSAHGVFLLNSNAMDVVLQPSPALSWRSTGGILDVYIFLGPEPKSVVRQYLDVVGYPFMPPYWGLGFHLCRWGYSSTAITSQVVENMTRAHFPLDVQWNDLDYMDARRDFTFNKDGFRDFPAMVRELHQGGRRYMMIVDPAISSSGPAGSYRPYDEGLRRGVFITNETSQPLIGKVWPGSTAFPDFTNPAALAWWEDMVAEFHDQVPFDGMWIDMNEPSNFIRGSEDGCPDNELENPPYVPGVVGGTLQAATICASSHQFLSTHYNLHNLYGLTEAIASHRALVKARGTRPFVISRSTFAGHGRYAGHWTGDVWSSWEQLASSVPEILQFNLLGVPLVGADVCGFLGNTSEELCVRWTQLGAFYPFMRNHNGLLNLPQEPYSFSEPAQQAMRKALTLRYALLPHLYTLFHQAHVAGETVARPLFLEFPKDSSTWTVDHQLLWGEALLITPVLQAGKAEVTGYFPLGIWYDLQTVPIEALGSLPPPPAAPREPAIHSEGQWVTLPAPLDTINVHLRAGYIIPLQGPGLTTTESRQQPMALAVALTKGGEARGELFWDDGESLEVLERGAYTQVLFLARNNTIVNELVHVTSEGAGLQLQKVTVLGVATTPQQVLSNGVPVSNFTYSPDTKVLDIPVSLLMAEQFLISWS.

A signal peptide spans 1–27 (MRVRHPPCSRRLLAICALVSLATAALL). Positions 28-69 (GHILLHDFLLVPRELSGSSPVLEETHPAHQQGASRPGPRDAQ) are excised as a propeptide. The interval 47 to 80 (PVLEETHPAHQQGASRPGPRDAQAHLGRPRAVPT) is disordered. Residues 80-131 (TQCDVPPNSRFDCAPDKAITREQCDARGCCYIPAKQGLRGAQMGQPWCFFPP) enclose the P-type domain. 3 disulfides stabilise this stretch: cysteine 82–cysteine 109, cysteine 92–cysteine 108, and cysteine 103–cysteine 127. N-linked (GlcNAc...) asparagine glycosylation is found at asparagine 140, asparagine 233, and asparagine 390. Aspartate 404 provides a ligand contact to substrate. N-linked (GlcNAc...) asparagine glycosylation is present at asparagine 470. The Nucleophile role is filled by aspartate 518. Glutamate 521 is an active-site residue. Cysteine 533 and cysteine 558 are oxidised to a cystine. Substrate contacts are provided by arginine 600 and aspartate 616. The cysteines at positions 647 and 658 are disulfide-linked. Asparagine 652 carries an N-linked (GlcNAc...) asparagine glycan. Histidine 674 serves as a coordination point for substrate. 2 N-linked (GlcNAc...) asparagine glycosylation sites follow: asparagine 882 and asparagine 925.

The protein belongs to the glycosyl hydrolase 31 family.

The protein localises to the lysosome. It is found in the lysosome membrane. It catalyses the reaction Hydrolysis of terminal, non-reducing (1-&gt;4)-linked alpha-D-glucose residues with release of alpha-D-glucose.. Essential for the degradation of glycogen in lysosomes. Has highest activity on alpha-1,4-linked glycosidic linkages, but can also hydrolyze alpha-1,6-linked glucans. This Pongo abelii (Sumatran orangutan) protein is Lysosomal alpha-glucosidase (GAA).